The primary structure comprises 230 residues: Ureidoacrylate amidohydrolase RutB (230 aa).

D24 acts as the Proton acceptor in catalysis. The active site involves K133. The Nucleophile role is filled by C166.

The protein belongs to the isochorismatase family. RutB subfamily.

The catalysed reaction is (Z)-3-ureidoacrylate + H2O + H(+) = (Z)-3-aminoacrylate + NH4(+) + CO2. It catalyses the reaction (Z)-3-ureidoacrylate + H2O = (Z)-3-aminoacrylate + carbamate + H(+). It carries out the reaction (Z)-2-methylureidoacrylate + H2O + H(+) = (Z)-2-methylaminoacrylate + NH4(+) + CO2. Hydrolyzes ureidoacrylate to form aminoacrylate and carbamate. The carbamate hydrolyzes spontaneously, thereby releasing one of the nitrogen atoms of the pyrimidine ring as ammonia and one of its carbon atoms as CO2. The sequence is that of Ureidoacrylate amidohydrolase RutB from Escherichia coli O150:H5 (strain SE15).